A 109-amino-acid polypeptide reads, in one-letter code: Nucleoid-associated protein SG0690 (109 aa).

The tract at residues 1-23 (MFGKGGMGNLMKQAQQMQEKMQR) is disordered.

This sequence belongs to the YbaB/EbfC family. As to quaternary structure, homodimer.

Its subcellular location is the cytoplasm. It localises to the nucleoid. In terms of biological role, binds to DNA and alters its conformation. May be involved in regulation of gene expression, nucleoid organization and DNA protection. The polypeptide is Nucleoid-associated protein SG0690 (Sodalis glossinidius (strain morsitans)).